We begin with the raw amino-acid sequence, 4655 residues long: Low-density lipoprotein receptor-related protein 2 (4655 aa).

A signal peptide spans 1 to 25 (MDRGPAAVACTLLLALVACLAPASG). Residues 26–4423 (QECDSAHFRC…FSKGISPGTT (4398 aa)) lie on the Extracellular side of the membrane. 7 consecutive LDL-receptor class A domains span residues 27 to 63 (ECDS…IGCA), 66 to 104 (TCQQ…QDCS), 107 to 143 (TCSS…NDCQ), 146 to 180 (TCEQ…INCT), 182 to 218 (ICLH…HACN), 221 to 257 (TCGG…DGCE), and 265 to 308 (KCSP…KYCS). Intrachain disulfides connect cysteine 28/cysteine 40, cysteine 35/cysteine 53, cysteine 47/cysteine 62, cysteine 67/cysteine 80, cysteine 74/cysteine 93, cysteine 87/cysteine 103, cysteine 108/cysteine 120, cysteine 115/cysteine 133, cysteine 127/cysteine 142, cysteine 147/cysteine 157, cysteine 152/cysteine 170, cysteine 164/cysteine 179, cysteine 183/cysteine 195, cysteine 190/cysteine 208, cysteine 202/cysteine 217, cysteine 222/cysteine 234, cysteine 229/cysteine 247, cysteine 241/cysteine 256, cysteine 266/cysteine 279, cysteine 273/cysteine 292, and cysteine 286/cysteine 307. Asparagine 159 and asparagine 178 each carry an N-linked (GlcNAc...) asparagine glycan. Residues asparagine 299, asparagine 300, asparagine 341, asparagine 388, and asparagine 463 are each glycosylated (N-linked (GlcNAc...) asparagine). 8 LDL-receptor class B repeats span residues 436-478 (QRVF…DWVN), 479-521 (NKIY…DPTV), 522-568 (GYLF…DMIS), 569-613 (KRVY…FEGQ), 753-795 (STIF…DWIS), 796-837 (KNLY…HPFA), 838-881 (GYLF…DWAA), and 882-925 (SRLY…FGEH). The N-linked (GlcNAc...) asparagine glycan is linked to asparagine 866. An LDL-receptor class A 8 domain is found at 1025-1061 (QCGLFSFPCKNGRCVPNYYLCDGVDDCHDNSDEQLCG). Cystine bridges form between cysteine 1026–cysteine 1038, cysteine 1033–cysteine 1051, and cysteine 1045–cysteine 1060. The N-linked (GlcNAc...) asparagine glycan is linked to asparagine 1064. 7 LDL-receptor class A domains span residues 1066–1102 (TCSS…HNCP), 1108–1144 (SCLD…KNCN), 1148–1184 (TCQP…VGCV), 1186–1223 (NCTA…AGCP), 1229–1267 (MCHS…NACV), 1270–1306 (TCPS…KDCP), and 1304–1349 (DCPT…PLCN). 6 disulfides stabilise this stretch: cysteine 1067/cysteine 1079, cysteine 1074/cysteine 1092, cysteine 1086/cysteine 1101, cysteine 1109/cysteine 1121, cysteine 1116/cysteine 1134, and cysteine 1128/cysteine 1143. Ca(2+)-binding residues include tryptophan 1126, aspartate 1129, aspartate 1131, aspartate 1133, aspartate 1139, and glutamate 1140. An N-linked (GlcNAc...) asparagine glycan is attached at asparagine 1144. Intrachain disulfides connect cysteine 1149–cysteine 1161, cysteine 1156–cysteine 1174, and cysteine 1168–cysteine 1183. Asparagine 1186 is a glycosylation site (N-linked (GlcNAc...) asparagine). Disulfide bonds link cysteine 1187-cysteine 1200, cysteine 1194-cysteine 1213, cysteine 1207-cysteine 1222, cysteine 1230-cysteine 1243, cysteine 1237-cysteine 1256, cysteine 1250-cysteine 1266, cysteine 1271-cysteine 1283, cysteine 1278-cysteine 1296, cysteine 1290-cysteine 1305, cysteine 1305-cysteine 1325, cysteine 1312-cysteine 1338, and cysteine 1332-cysteine 1348. The Ca(2+) site is built by aspartate 1208, valine 1210, aspartate 1212, aspartate 1218, and glutamate 1219. 3 N-linked (GlcNAc...) asparagine glycosylation sites follow: asparagine 1327, asparagine 1340, and asparagine 1383. In terms of domain architecture, EGF-like 1; calcium-binding spans 1390-1429 (DIDECDILGSCSQHCYNMRGSFRCSCDTGYMLESDGRTCK). 3 disulfides stabilise this stretch: cysteine 1394–cysteine 1404, cysteine 1400–cysteine 1413, and cysteine 1415–cysteine 1428. 3 N-linked (GlcNAc...) asparagine glycosylation sites follow: asparagine 1464, asparagine 1496, and asparagine 1550. LDL-receptor class B repeat units follow at residues 1478–1520 (GRIF…DWVG), 1521–1563 (RNLY…DPRM), 1566–1609 (HLLF…DYPN), 1610–1654 (RLLY…FEDS), and 1655–1695 (VYWT…VHPS). Asparagine 1675 is a glycosylation site (N-linked (GlcNAc...) asparagine). Positions 1700-1741 (SVNPCAFSRCSHLCLLSSQGPHFYSCVCPSGWSLSPDLLNCL) constitute an EGF-like 2 domain. 3 disulfides stabilise this stretch: cysteine 1704–cysteine 1713, cysteine 1709–cysteine 1725, and cysteine 1727–cysteine 1740. 5 LDL-receptor class B repeats span residues 1790 to 1832 (QYIY…DWIS), 1833 to 1882 (RNLY…DPAR), 1883 to 1930 (GKLY…DIEE), 1931 to 1972 (QKLY…HDSF), and 1973 to 2013 (LYYT…YHRR). An N-linked (GlcNAc...) asparagine glycan is attached at asparagine 1810. An N-linked (GlcNAc...) asparagine glycan is attached at asparagine 2055. LDL-receptor class B repeat units follow at residues 2107 to 2156 (GFIY…DWVA), 2157 to 2201 (GNLY…DPKN), 2202 to 2245 (RYLF…DRSD), 2246 to 2289 (GYVY…FENS), 2431 to 2477 (DRIY…DWIT), 2478 to 2518 (RRIY…DPCQ), 2519 to 2562 (GYLY…DYEE), 2563 to 2604 (DLLY…YGQY), and 2605 to 2646 (IYWT…VVKN). Residues asparagine 2177 and asparagine 2224 are each glycosylated (N-linked (GlcNAc...) asparagine). N-linked (GlcNAc...) asparagine glycosylation is found at asparagine 2499 and asparagine 2547. LDL-receptor class A domains are found at residues 2699–2737 (RCGA…SVCA), 2740–2776 (TCSP…AGCL), 2779–2818 (DCNA…KNCP), 2821–2860 (TCQS…TYCT), 2863–2900 (TCSS…ASCG), 2905–2944 (TCLA…HQCQ), 2947–2989 (NCSD…QNCT), 2992–3028 (TCSE…RGCL), 3031–3069 (TCQQ…HLCH), and 3074–3110 (TCPP…KGCG). 18 disulfide bridges follow: cysteine 2700/cysteine 2712, cysteine 2707/cysteine 2725, cysteine 2719/cysteine 2736, cysteine 2741/cysteine 2753, cysteine 2748/cysteine 2766, cysteine 2760/cysteine 2775, cysteine 2780/cysteine 2793, cysteine 2788/cysteine 2806, cysteine 2800/cysteine 2817, cysteine 2822/cysteine 2835, cysteine 2829/cysteine 2848, cysteine 2842/cysteine 2859, cysteine 2864/cysteine 2876, cysteine 2871/cysteine 2889, cysteine 2883/cysteine 2899, cysteine 2906/cysteine 2918, cysteine 2913/cysteine 2931, and cysteine 2925/cysteine 2943. An N-linked (GlcNAc...) asparagine glycan is attached at asparagine 2781. Residues asparagine 2809 and asparagine 2810 are each glycosylated (N-linked (GlcNAc...) asparagine). N-linked (GlcNAc...) asparagine glycosylation is present at asparagine 2947. 18 disulfides stabilise this stretch: cysteine 2948–cysteine 2965, cysteine 2955–cysteine 2978, cysteine 2972–cysteine 2988, cysteine 2993–cysteine 3005, cysteine 3000–cysteine 3018, cysteine 3012–cysteine 3027, cysteine 3032–cysteine 3044, cysteine 3039–cysteine 3057, cysteine 3051–cysteine 3068, cysteine 3075–cysteine 3087, cysteine 3082–cysteine 3100, cysteine 3094–cysteine 3109, cysteine 3114–cysteine 3126, cysteine 3122–cysteine 3135, cysteine 3137–cysteine 3150, cysteine 3156–cysteine 3167, cysteine 3163–cysteine 3176, and cysteine 3178–cysteine 3191. The N-linked (GlcNAc...) asparagine glycan is linked to asparagine 2987. Residues 3110-3151 (GINECHDPSISGCDHNCTDTLTSFYCSCRPGYKLMSDKRTCV) enclose the EGF-like 3 domain. A glycan (N-linked (GlcNAc...) asparagine) is linked at asparagine 3125. Residues 3152–3192 (DIDECTEMPFVCSQKCENVIGSYICKCAPGYLREPDGKTCR) enclose the EGF-like 4; calcium-binding domain. Asparagine 3211, asparagine 3257, asparagine 3315, and asparagine 3355 each carry an N-linked (GlcNAc...) asparagine glycan. LDL-receptor class B repeat units lie at residues 3239–3281 (KRLY…DWVS), 3282–3324 (RKLY…DNPR), 3333–3376 (GYLY…DYTN), 3377–3419 (DLLY…FEDT), and 3420–3460 (IYWT…YHPY). Residue asparagine 3446 is glycosylated (N-linked (GlcNAc...) asparagine). 11 LDL-receptor class A domains span residues 3511–3549 (MCSS…ALCP), 3552–3590 (FCRL…LLCE), 3593–3631 (HCDS…SHCA), 3634–3672 (TCRP…EECM), 3677–3715 (LCDN…QGCE), 3718–3755 (TCHP…ENCA), 3758–3794 (ECTE…RDCE), 3797–3833 (TCHP…ADCP), 3841–3879 (YCQA…HLCL), 3882–3921 (PCNS…EHCR), and 3927–3963 (PCTE…LGCN). 33 disulfides stabilise this stretch: cysteine 3512-cysteine 3525, cysteine 3519-cysteine 3538, cysteine 3532-cysteine 3548, cysteine 3553-cysteine 3565, cysteine 3560-cysteine 3578, cysteine 3572-cysteine 3589, cysteine 3594-cysteine 3606, cysteine 3601-cysteine 3619, cysteine 3613-cysteine 3630, cysteine 3635-cysteine 3647, cysteine 3642-cysteine 3660, cysteine 3654-cysteine 3671, cysteine 3678-cysteine 3692, cysteine 3686-cysteine 3705, cysteine 3699-cysteine 3714, cysteine 3719-cysteine 3732, cysteine 3727-cysteine 3745, cysteine 3739-cysteine 3754, cysteine 3759-cysteine 3771, cysteine 3766-cysteine 3784, cysteine 3778-cysteine 3793, cysteine 3798-cysteine 3810, cysteine 3805-cysteine 3823, cysteine 3817-cysteine 3832, cysteine 3842-cysteine 3854, cysteine 3849-cysteine 3867, cysteine 3861-cysteine 3878, cysteine 3883-cysteine 3896, cysteine 3891-cysteine 3909, cysteine 3903-cysteine 3920, cysteine 3928-cysteine 3940, cysteine 3935-cysteine 3953, and cysteine 3947-cysteine 3962. N-linked (GlcNAc...) asparagine glycosylation occurs at asparagine 3564. N-linked (GlcNAc...) asparagine glycosylation occurs at asparagine 3680. An N-linked (GlcNAc...) asparagine glycan is attached at asparagine 3978. The EGF-like 5; calcium-binding domain occupies 4007–4048 (DINECEQFGTCPQHCRNTKGSYECVCADGFTSMSDRPGKRCA). Cystine bridges form between cysteine 4011–cysteine 4021, cysteine 4017–cysteine 4030, and cysteine 4032–cysteine 4047. The N-linked (GlcNAc...) asparagine glycan is linked to asparagine 4068. 3 LDL-receptor class B repeats span residues 4154–4196 (RHIY…NPKL), 4197–4240 (GLMF…DYLN), and 4242–4283 (DRIY…FEDQ). Residue asparagine 4327 is glycosylated (N-linked (GlcNAc...) asparagine). The region spanning 4377–4411 (LPPPCRCMHGGNCYFDETDLPKCKCPSGYTGKYCE) is the EGF-like 6 domain. 3 disulfides stabilise this stretch: cysteine 4381–cysteine 4389, cysteine 4383–cysteine 4399, and cysteine 4401–cysteine 4410. The chain crosses the membrane as a helical span at residues 4424–4446 (AVAVLLTILLIVVIGALAIAGFF). Residues 4447–4655 (HYRRTGSLLP…ANLVKEDSEV (209 aa)) lie on the Cytoplasmic side of the membrane. Positions 4453–4462 (SLLPALPKLP) match the SH3-binding motif. A PxLPxI/L motif 1; mediates interaction with ANKRA2 motif is present at residues 4456–4461 (PALPKL). A PxLPxI/L motif 2; mediates interaction with ANKRA2 motif is present at residues 4459 to 4464 (PKLPSL). Residues serine 4463 and serine 4466 each carry the phosphoserine modification. The short motif at 4521–4526 (FENPMY) is the Endocytosis signal element. The segment at 4550 to 4574 (KNYGSPINPSEIVPETNPTSPAADG) is disordered. Positions 4565–4574 (TNPTSPAADG) are enriched in polar residues. At serine 4569 the chain carries Phosphoserine. The tract at residues 4589 to 4602 (QTTNFENPIYAQME) is interaction with DAB2. Positions 4595-4598 (NPIY) match the NPXY motif motif. The short motif at 4598 to 4601 (YAQM) is the SH2-binding element. Positions 4601 to 4655 (MENEQKESVAATPPPSPSLPAKPKPPSRRDPTPTYSATEDTFKDTANLVKEDSEV) are disordered. Residues 4611–4622 (ATPPPSPSLPAK) carry the SH3-binding motif. The span at 4612–4624 (TPPPSPSLPAKPK) shows a compositional bias: pro residues. Serine 4616 is subject to Phosphoserine. Threonine 4632 bears the Phosphothreonine mark. Residue serine 4653 is modified to Phosphoserine.

This sequence belongs to the LDLR family. Binds plasminogen, extracellular matrix components, plasminogen activator-plasminogen activator inhibitor type I complex, apolipoprotein E-enriched beta-VLDL, lipoprotein lipase, lactoferrin, CLU/clusterin and calcium. Forms a multimeric complex together with LRPAP1. Interacts (via PxLPxI/L motif) with ANKRA2 (via ankyrin repeats). Interacts with LRP2BP. Interacts (via NPXY motif) with DAB2; the interaction is not affected by tyrosine phosphorylation of the NPXY motif. Interacts with MB. Interacts with BMP4. Interacts with the Sonic hedgehog protein N-product which is the active product of SHH. Interacts with CST3 in a calcium-dependent manner. Interacts with the vitamin-D binding protein GC/DBP. Interacts with sex hormone-binding protein SHBG. Interacts with angiotensin-2. Also interacts with angiotensin 1-7. Interacts with APOM. Interacts with selenoprotein SEPP1. Interacts with LEP. Interacts with ALB. Interacts with the antiapoptotic protein BIRC5/survivin. Interacts with matrix metalloproteinase MMP2 in complex with metalloproteinase inhibitor TIMP1. In neurons, forms a trimeric complex with APP and APPB1/FE65. Interacts with LDLRAP1/ARH; mediates trafficking of LRP2 to the endocytic recycling compartment. Does not interact with beta-amyloid protein 40 alone but interacts with the complex composed of beta-amyloid protein 40 and CLU/APOJ. Interacts with MDK. A fraction undergoes proteolytic cleavage of the extracellular domain at the cell membrane to generate a cytoplasmic tail fragment. This is internalized into the early endosome from where it trafficks in an LDLRAP1/ARH-dependent manner to the endocytic recycling compartment (ERC). In the ERC, it is further cleaved by gamma-secretase to release a fragment which translocates to the nucleus and mediates transcriptional repression. Post-translationally, N-glycosylation is required for ligand binding. As to expression, expressed in first and third trimester cytotrophoblasts in the placenta (at protein level). Absorptive epithelia, including renal proximal tubules.

The protein localises to the apical cell membrane. The protein resides in the endosome lumen. Its subcellular location is the membrane. It localises to the coated pit. It is found in the cell projection. The protein localises to the dendrite. The protein resides in the axon. Its function is as follows. Multiligand endocytic receptor. Acts together with CUBN to mediate endocytosis of high-density lipoproteins. Mediates receptor-mediated uptake of polybasic drugs such as aprotinin, aminoglycosides and polymyxin B. In the kidney, mediates the tubular uptake and clearance of leptin. Also mediates transport of leptin across the blood-brain barrier through endocytosis at the choroid plexus epithelium. Endocytosis of leptin in neuronal cells is required for hypothalamic leptin signaling and leptin-mediated regulation of feeding and body weight. Mediates endocytosis and subsequent lysosomal degradation of CST3 in kidney proximal tubule cells. Mediates renal uptake of 25-hydroxyvitamin D3 in complex with the vitamin D3 transporter GC/DBP. Mediates renal uptake of metallothionein-bound heavy metals. Together with CUBN, mediates renal reabsorption of myoglobin. Mediates renal uptake and subsequent lysosomal degradation of APOM. Plays a role in kidney selenium homeostasis by mediating renal endocytosis of selenoprotein SEPP1. Mediates renal uptake of the antiapoptotic protein BIRC5/survivin which may be important for functional integrity of the kidney. Mediates renal uptake of matrix metalloproteinase MMP2 in complex with metalloproteinase inhibitor TIMP1. Mediates endocytosis of Sonic hedgehog protein N-product (ShhN), the active product of SHH. Also mediates ShhN transcytosis. In the embryonic neuroepithelium, mediates endocytic uptake and degradation of BMP4, is required for correct SHH localization in the ventral neural tube and plays a role in patterning of the ventral telencephalon. Required at the onset of neurulation to sequester SHH on the apical surface of neuroepithelial cells of the rostral diencephalon ventral midline and to control PTCH1-dependent uptake and intracellular trafficking of SHH. During neurulation, required in neuroepithelial cells for uptake of folate bound to the folate receptor FOLR1 which is necessary for neural tube closure. In the adult brain, negatively regulates BMP signaling in the subependymal zone which enables neurogenesis to proceed. In astrocytes, mediates endocytosis of ALB which is required for the synthesis of the neurotrophic factor oleic acid. Involved in neurite branching. During optic nerve development, required for SHH-mediated migration and proliferation of oligodendrocyte precursor cells. Mediates endocytic uptake and clearance of SHH in the retinal margin which protects retinal progenitor cells from mitogenic stimuli and keeps them quiescent. Plays a role in reproductive organ development by mediating uptake in reproductive tissues of androgen and estrogen bound to the sex hormone binding protein SHBG. Mediates endocytosis of angiotensin-2. Also mediates endocytosis of angiotensis 1-7. Binds to the complex composed of beta-amyloid protein 40 and CLU/APOJ and mediates its endocytosis and lysosomal degradation. Required for embryonic heart development. Required for normal hearing, possibly through interaction with estrogen in the inner ear. The polypeptide is Low-density lipoprotein receptor-related protein 2 (Homo sapiens (Human)).